We begin with the raw amino-acid sequence, 232 residues long: Pyridoxine 5'-phosphate synthase (232 aa).

3-amino-2-oxopropyl phosphate is bound at residue Asn-7. Asp-9 to His-10 contacts 1-deoxy-D-xylulose 5-phosphate. Arg-18 lines the 3-amino-2-oxopropyl phosphate pocket. Catalysis depends on His-43, which acts as the Proton acceptor. 1-deoxy-D-xylulose 5-phosphate-binding residues include Arg-45 and His-50. Glu-69 acts as the Proton acceptor in catalysis. Residue Thr-99 participates in 1-deoxy-D-xylulose 5-phosphate binding. Catalysis depends on His-185, which acts as the Proton donor. Residues Gly-186 and Gly-207–His-208 contribute to the 3-amino-2-oxopropyl phosphate site.

The protein belongs to the PNP synthase family. As to quaternary structure, homooctamer; tetramer of dimers.

It localises to the cytoplasm. It catalyses the reaction 3-amino-2-oxopropyl phosphate + 1-deoxy-D-xylulose 5-phosphate = pyridoxine 5'-phosphate + phosphate + 2 H2O + H(+). The protein operates within cofactor biosynthesis; pyridoxine 5'-phosphate biosynthesis; pyridoxine 5'-phosphate from D-erythrose 4-phosphate: step 5/5. Catalyzes the complicated ring closure reaction between the two acyclic compounds 1-deoxy-D-xylulose-5-phosphate (DXP) and 3-amino-2-oxopropyl phosphate (1-amino-acetone-3-phosphate or AAP) to form pyridoxine 5'-phosphate (PNP) and inorganic phosphate. The chain is Pyridoxine 5'-phosphate synthase from Gluconobacter oxydans (strain 621H) (Gluconobacter suboxydans).